Here is a 318-residue protein sequence, read N- to C-terminus: tRNA dimethylallyltransferase (318 aa).

Position 28 to 35 (28 to 35 (GPTGAGKS)) interacts with ATP. 30–35 (TGAGKS) lines the substrate pocket. An interaction with substrate tRNA region spans residues 53-56 (DSMQ).

It belongs to the IPP transferase family. In terms of assembly, monomer. It depends on Mg(2+) as a cofactor.

It catalyses the reaction adenosine(37) in tRNA + dimethylallyl diphosphate = N(6)-dimethylallyladenosine(37) in tRNA + diphosphate. Functionally, catalyzes the transfer of a dimethylallyl group onto the adenine at position 37 in tRNAs that read codons beginning with uridine, leading to the formation of N6-(dimethylallyl)adenosine (i(6)A). In Parafrankia sp. (strain EAN1pec), this protein is tRNA dimethylallyltransferase.